Reading from the N-terminus, the 160-residue chain is Lipoprotein signal peptidase (160 aa).

A run of 2 helical transmembrane segments spans residues 60 to 80 (TEWLIAASCLGVILALTAFFL) and 84 to 104 (LPFLDTRPGVAALGIILAGTI). Active-site residues include aspartate 118 and aspartate 132. The helical transmembrane segment at 127–147 (TFNMADSCLTLGIIWLVLLYL) threads the bilayer.

This sequence belongs to the peptidase A8 family.

It is found in the cell membrane. The enzyme catalyses Release of signal peptides from bacterial membrane prolipoproteins. Hydrolyzes -Xaa-Yaa-Zaa-|-(S,diacylglyceryl)Cys-, in which Xaa is hydrophobic (preferably Leu), and Yaa (Ala or Ser) and Zaa (Gly or Ala) have small, neutral side chains.. It participates in protein modification; lipoprotein biosynthesis (signal peptide cleavage). Its function is as follows. This protein specifically catalyzes the removal of signal peptides from prolipoproteins. The protein is Lipoprotein signal peptidase of Dehalococcoides mccartyi (strain ATCC BAA-2266 / KCTC 15142 / 195) (Dehalococcoides ethenogenes (strain 195)).